A 498-amino-acid polypeptide reads, in one-letter code: ATP synthase subunit beta, chloroplastic (498 aa).

ATP is bound at residue 172–179 (GGAGVGKT).

This sequence belongs to the ATPase alpha/beta chains family. F-type ATPases have 2 components, CF(1) - the catalytic core - and CF(0) - the membrane proton channel. CF(1) has five subunits: alpha(3), beta(3), gamma(1), delta(1), epsilon(1). CF(0) has four main subunits: a(1), b(1), b'(1) and c(9-12).

The protein resides in the plastid. The protein localises to the chloroplast thylakoid membrane. It carries out the reaction ATP + H2O + 4 H(+)(in) = ADP + phosphate + 5 H(+)(out). Produces ATP from ADP in the presence of a proton gradient across the membrane. The catalytic sites are hosted primarily by the beta subunits. The chain is ATP synthase subunit beta, chloroplastic from Galbulimima belgraveana (Northern pigeonberry ash).